The following is a 529-amino-acid chain: Probable cytochrome P450 6t1 (529 aa).

C472 is a heme binding site.

Belongs to the cytochrome P450 family. Requires heme as cofactor.

Its subcellular location is the endoplasmic reticulum membrane. The protein localises to the microsome membrane. Its function is as follows. May be involved in the metabolism of insect hormones and in the breakdown of synthetic insecticides. The sequence is that of Probable cytochrome P450 6t1 (Cyp6t1) from Drosophila melanogaster (Fruit fly).